A 753-amino-acid polypeptide reads, in one-letter code: Translation initiation factor IF-2 (753 aa).

The segment at 1-166 is disordered; the sequence is MSEKPRRDTG…PVMRPRGPVA (166 aa). 3 stretches are compositionally biased toward low complexity: residues 19–43, 71–81, and 102–122; these read STGQSTNRTSNQQTGTGRTPTATGA, NARPAAPANAR, and TPAPVRGGGATPAPARGTNTR. Basic and acidic residues predominate over residues 133–146; it reads PQPEEREREREAVL. Residues 153-162 show a composition bias toward low complexity; sequence TTTRPVMRPR. The tr-type G domain occupies 249-418; it reads PRPPVVTIMG…LLVADLEDLR (170 aa). A G1 region spans residues 258-265; that stretch reads GHVDHGKT. A GTP-binding site is contributed by 258-265; sequence GHVDHGKT. The tract at residues 283 to 287 is G2; that stretch reads GITQH. Residues 304 to 307 are G3; the sequence is DTPG. Residues 304–308 and 358–361 contribute to the GTP site; these read DTPGH and NKID. Residues 358–361 form a G4 region; sequence NKID. The G5 stretch occupies residues 394 to 396; the sequence is SAR.

It belongs to the TRAFAC class translation factor GTPase superfamily. Classic translation factor GTPase family. IF-2 subfamily.

Its subcellular location is the cytoplasm. In terms of biological role, one of the essential components for the initiation of protein synthesis. Protects formylmethionyl-tRNA from spontaneous hydrolysis and promotes its binding to the 30S ribosomal subunits. Also involved in the hydrolysis of GTP during the formation of the 70S ribosomal complex. This is Translation initiation factor IF-2 from Chloroflexus aggregans (strain MD-66 / DSM 9485).